We begin with the raw amino-acid sequence, 1361 residues long: Protein transport protein SEC16B homolog (1361 aa).

Ser-46 bears the Phosphoserine mark. Disordered stretches follow at residues 82–109, 487–513, 984–1013, 1025–1062, 1163–1204, 1216–1235, and 1306–1361; these read NEGASGSVGEDEPSSIAPEAVQFPHSDA, VDDAPQSFQSSQLFSPSAGRSSDGRPP, PVGGMPPPAPHSTKGNLQGNEYQHQQQEAT, SSLMPPASVEPTHESGGSGRRMAVHTRSVSEPDFGRTP, ENKS…ARGR, NPPGRGNSHTMIPSPSVQTA, and SVNG…EVEL. Residues 491 to 503 show a composition bias toward low complexity; sequence PQSFQSSQLFSPS. Positions 996-1013 are enriched in polar residues; sequence TKGNLQGNEYQHQQQEAT. 3 stretches are compositionally biased toward polar residues: residues 1169-1200, 1222-1234, and 1308-1325; these read IPSNGNWSSGGPTPSENSSGIPPISHGSNQFS, NSHTMIPSPSVQT, and NGDNHQPPTSRRTASWSG. Residues 1326 to 1354 show a composition bias toward low complexity; that stretch reads NFNTSFTPPTSPSTFKPVLLNSSSSSLGE.

Belongs to the SEC16 family.

The protein resides in the golgi apparatus. The protein localises to the endoplasmic reticulum. Its function is as follows. Required for protein transport from the endoplasmic reticulum to the Golgi apparatus. The polypeptide is Protein transport protein SEC16B homolog (Arabidopsis thaliana (Mouse-ear cress)).